Consider the following 812-residue polypeptide: cAMP-regulated phosphoprotein 21 (812 aa).

Residues 1-130 (MSEQGDLNQA…KDKTSEKPKI (130 aa)) are disordered. The residue at position 2 (Ser2) is an N-acetylserine. Over residues 9 to 25 (QAIAEEGGTEQETATPE) the composition is skewed to low complexity. The stretch at 32-58 (ESLDEEEKLELQRRLEAQNQERRKSKS) forms a coiled coil. Ser33 is modified (phosphoserine). The span at 40 to 53 (LELQRRLEAQNQER) shows a compositional bias: basic and acidic residues. Ser56 is modified (phosphoserine). Low complexity predominate over residues 90–100 (IHLQLSSFSSL). The segment covering 102–130 (EEDKSRKDDSEREKEKDKNKDKTSEKPKI) has biased composition (basic and acidic residues). The residue at position 134 (Ser134) is a Phosphoserine. Residues 164–227 (RMILLKMEQE…SVIINKTSST (64 aa)) form the R3H domain. One can recognise an SUZ domain in the interval 228 to 300 (RIPEQRFCEH…VRERIFAHDS (73 aa)). Residues 246–281 (SQKRFILKRDNSSIDKEDNQQNRMHPFRDDRRSKSI) are disordered. Phosphoserine is present on Ser300. Disordered regions lie at residues 332 to 436 (RGNR…PLVS), 485 to 544 (HTGQ…MAGP), and 561 to 632 (LSRQ…QQPP). Positions 339-349 (GRTSGSRQSSS) are enriched in low complexity. Positions 351–360 (NELKWSDHQR) are enriched in basic and acidic residues. The segment covering 361-373 (AWSSTDSDSSNRN) has biased composition (polar residues). Phosphoserine occurs at positions 363 and 383. Positions 391-423 (TRGDSTSSTRSTGKLSKAGSESSSSAGSSGSLS) are enriched in low complexity. Ser562 carries the post-translational modification Phosphoserine. Over residues 582 to 602 (LMPQPAQQPSYVIASTGQQLP) the composition is skewed to polar residues. Residues 619 to 632 (QPPPSPQGFVQQPP) show a composition bias toward pro residues. Arg655 carries the asymmetric dimethylarginine modification.

In terms of assembly, interacts with CALM1. Post-translationally, phosphorylation at Ser-56 favors interaction with CALM1. In terms of processing, isoform 1 is methylated by CARM1 at Arg-655 in immature thymocytes. As to expression, isoform 2 is expressed in brain. Isoform 1 is present in immature thymocytes (at protein level).

The protein resides in the cytoplasm. Its function is as follows. Isoform 2 may act as a competitive inhibitor of calmodulin-dependent enzymes such as calcineurin in neurons. The chain is cAMP-regulated phosphoprotein 21 (ARPP21) from Homo sapiens (Human).